A 54-amino-acid chain; its full sequence is Photoreceptor disk component PRCD (54 aa).

A lipid anchor (S-palmitoyl cysteine) is attached at cysteine 2. Positions 25-54 (PEPSDVDGAARGSSLDADPQSSGREKEPLK) are disordered.

This sequence belongs to the PRCD family. As to quaternary structure, interacts with RHO/rhodopsin; the interaction promotes PRCD stability. Palmitoylated at Cys-2. Palmitoylation is essential for protein stability and trafficking to the photoreceptor outer segment, but does not appear to be essential for membrane localization. Probably palmitoylated by ZDHHC3. Post-translationally, phosphorylated.

The protein resides in the cell projection. It is found in the cilium. It localises to the photoreceptor outer segment. Its subcellular location is the membrane. The protein localises to the endoplasmic reticulum. The protein resides in the golgi apparatus. Involved in vision. This Homo sapiens (Human) protein is Photoreceptor disk component PRCD.